Reading from the N-terminus, the 285-residue chain is Tropomyosin alpha-3 chain (285 aa).

Residues methionine 1–isoleucine 285 are a coiled coil. The residue at position 2 (methionine 2) is an N-acetylmethionine. An N-acetylalanine modification is found at methionine 2. Over residues lysine 16–glutamate 41 the composition is skewed to basic and acidic residues. A disordered region spans residues lysine 16–leucine 44. The residue at position 54 (threonine 54) is a Phosphothreonine. 2 positions are modified to phosphoserine: serine 62 and serine 88. Phosphothreonine is present on threonine 109. An N6-acetyllysine mark is found at glutamate 125 and leucine 177. Position 207 is a phosphoserine (serine 207). The residue at position 215 (tyrosine 215) is an N6-acetyllysine. At serine 216 the chain carries Phosphoserine. A Phosphothreonine modification is found at threonine 253. A Phosphotyrosine modification is found at tyrosine 262. Serine 272 bears the Phosphoserine mark. Residue threonine 283 is modified to Phosphothreonine. Serine 284 bears the Phosphoserine mark.

This sequence belongs to the tropomyosin family. In terms of assembly, homodimer. Heterodimer of an alpha (TPM1, TPM3 or TPM4) and a beta (TPM2) chain. Interacts with TMOD1. Interacts with TNNT1.

Its subcellular location is the cytoplasm. It localises to the cytoskeleton. Binds to actin filaments in muscle and non-muscle cells. Plays a central role, in association with the troponin complex, in the calcium dependent regulation of vertebrate striated muscle contraction. Smooth muscle contraction is regulated by interaction with caldesmon. In non-muscle cells is implicated in stabilizing cytoskeleton actin filaments. The chain is Tropomyosin alpha-3 chain (TPM3) from Homo sapiens (Human).